Here is a 264-residue protein sequence, read N- to C-terminus: Phosphatidylglycerol--prolipoprotein diacylglyceryl transferase (264 aa).

3 helical membrane passes run 17 to 37, 59 to 79, and 95 to 115; these read LAIH…LWLA, LLFY…VLFY, and WKGG…MALF. Arg142 is a binding site for a 1,2-diacyl-sn-glycero-3-phospho-(1'-sn-glycerol). A run of 2 helical transmembrane segments spans residues 205–225 and 241–261; these read GQVS…AEYF and MGQW…VWAG.

It belongs to the Lgt family.

It localises to the cell inner membrane. The enzyme catalyses L-cysteinyl-[prolipoprotein] + a 1,2-diacyl-sn-glycero-3-phospho-(1'-sn-glycerol) = an S-1,2-diacyl-sn-glyceryl-L-cysteinyl-[prolipoprotein] + sn-glycerol 1-phosphate + H(+). Its pathway is protein modification; lipoprotein biosynthesis (diacylglyceryl transfer). In terms of biological role, catalyzes the transfer of the diacylglyceryl group from phosphatidylglycerol to the sulfhydryl group of the N-terminal cysteine of a prolipoprotein, the first step in the formation of mature lipoproteins. This is Phosphatidylglycerol--prolipoprotein diacylglyceryl transferase from Methylibium petroleiphilum (strain ATCC BAA-1232 / LMG 22953 / PM1).